The following is a 994-amino-acid chain: Receptor-like protein 6 (994 aa).

The N-terminal stretch at 1-25 (MTGLYSSMSFFLRTIVLLFSTSSFC) is a signal peptide. Topologically, residues 26 to 946 (NTFASLTQDS…SSSSSSEEDE (921 aa)) are extracellular. N116, N134, and N154 each carry an N-linked (GlcNAc...) asparagine glycan. 19 LRR repeats span residues 122–146 (LQHLQSVNLAYNNFTNSPIPAEFSK), 148–171 (MRLERLNLSRSSFSGHISIKLLQL), 174–199 (LVSLDLSSSFPYSPSSLSIEKPLFLH), 205–228 (FMNLRELDMSSVDISSAIPIEFSY), 230–253 (WSLRSLTLKGCNLLGRFPNSVLLI), 254–278 (PNLESISLDHNLNLEGSLPNFLRNN), 280–301 (LLKLSIYNTSFSGTIPNSISNL), 302–325 (KHLTSLKLQQSAFSGRIPSSLRSL), 326–349 (SHLSNLVLSENNFVGEIPSSVSNL), 350–373 (KQLTLFDVSDNNLNGNFPSSLLNL), 375–397 (QLRYIDICSNHFTGFLPPTISQL), 398–421 (SNLEFFSACDNSFTGSIPSSLFNI), 423–445 (SLTTLGLSYNQLNDTTNIKNISL), 446–471 (LHNLQRLLLDNNNFKASQVDLDVFLS), 477–497 (SLALSGIPLSTTNITSDSEFS), 498–520 (SHLEYLELSGCNIIEFPEFIRNQ), 521–544 (RNLSSIDLSNNNIKGQVPNWLWRL), 546–569 (ELSTVDLSNNSLIGFNGSLKALSG), and 571–595 (KIVMLDLSSNAFQGPLFMPPRGIQY). N-linked (GlcNAc...) asparagine glycosylation is found at N277 and N287. 3 N-linked (GlcNAc...) asparagine glycosylation sites follow: N420, N435, and N442. Residue N489 is glycosylated (N-linked (GlcNAc...) asparagine). N-linked (GlcNAc...) asparagine glycosylation is found at N522, N554, and N561. An LRR 20; degenerate repeat occupies 597–613 (LGSYNNFTGYIPPSICG). N602 is a glycosylation site (N-linked (GlcNAc...) asparagine). 10 LRR repeats span residues 614–637 (LANPLILDLSNNNLHGLIPRCLEA), 639–663 (MSSLSVLNLRNNSLDGSLPNIFMNA), 665–687 (VLSSLDVSHNTLEGKLPASLAGC), 689–710 (ALEILNVESNNINDTFPFWLNS), 711–737 (LPKLQVLVLRSNNFRGTLHNVDGVWFG), 739–762 (PLLRITDVSHNDFVGTLPSDYFMN), 803–827 (LTKYTVIDFAGNKIQGKIPESVGIL), 828–851 (KELHVLNLSSNAFTGHIPSSLANL), 852–875 (TNLESLDISQNKIGGEIPPELGTL), and 877–900 (SLEWINVSHNQLVGSIPQGTQFHR). N649 is a glycosylation site (N-linked (GlcNAc...) asparagine). An N-linked (GlcNAc...) asparagine glycan is attached at N701. N762 is a glycosylation site (N-linked (GlcNAc...) asparagine). N834 and N850 each carry an N-linked (GlcNAc...) asparagine glycan. 2 N-linked (GlcNAc...) asparagine glycosylation sites follow: N882 and N902. Residues 947-967 (LISWIAACLGFAPGMVFGLTM) form a helical membrane-spanning segment. Topologically, residues 968-994 (GYIMTSHKHEWFMDTFGRRKGRSTRTR) are cytoplasmic.

This sequence belongs to the RLP family.

The protein resides in the cell membrane. The polypeptide is Receptor-like protein 6 (Arabidopsis thaliana (Mouse-ear cress)).